The primary structure comprises 319 residues: 2-oxoglutarate and iron-dependent oxygenase domain-containing protein 3 (319 aa).

The disordered stretch occupies residues 1–34; it reads MAPQRRAATKAPEGNGAAERRNRSSTKKDRAPRE. At 1-42 the chain is on the cytoplasmic side; the sequence is MAPQRRAATKAPEGNGAAERRNRSSTKKDRAPREVQRLWQRP. Basic and acidic residues predominate over residues 18-34; it reads AERRNRSSTKKDRAPRE. A helical; Signal-anchor for type II membrane protein membrane pass occupies residues 43–65; sequence WLRTAGLGAGFVLTALLLWSSLG. Topologically, residues 66 to 319 are lumenal; sequence ADDGVAEVLA…DHGIEDPAFP (254 aa). A Fe2OG dioxygenase domain is found at 207–309; it reads KPTFFSRINS…AITIAFSCNP (103 aa). N-linked (GlcNAc...) asparagine glycosylation is present at N215. Fe cation contacts are provided by H230, D232, and H288. R298 is a catalytic residue. R298 contacts 2-oxoglutarate.

This sequence belongs to the OGFOD3 family. Requires Fe(2+) as cofactor. L-ascorbate is required as a cofactor.

Its subcellular location is the membrane. This chain is 2-oxoglutarate and iron-dependent oxygenase domain-containing protein 3 (OGFOD3), found in Homo sapiens (Human).